The following is a 755-amino-acid chain: 3-isopropylmalate dehydratase (755 aa).

[4Fe-4S] cluster contacts are provided by C353, C413, and C416. Disordered regions lie at residues 427–446 (GERC…GAGG), 471–493 (LTPA…ELEP), and 510–529 (DAPA…AAGM). Over residues 510–528 (DAPATGASPPSPAPSDAAG) the composition is skewed to low complexity.

It belongs to the aconitase/IPM isomerase family. As to quaternary structure, monomer. It depends on [4Fe-4S] cluster as a cofactor.

The catalysed reaction is (2R,3S)-3-isopropylmalate = (2S)-2-isopropylmalate. It participates in amino-acid biosynthesis; L-leucine biosynthesis; L-leucine from 3-methyl-2-oxobutanoate: step 2/4. Catalyzes the isomerization between 2-isopropylmalate and 3-isopropylmalate, via the formation of 2-isopropylmaleate. The chain is 3-isopropylmalate dehydratase (LEUA) from Rhizomucor pusillus.